Reading from the N-terminus, the 865-residue chain is Probable beta-glucosidase J (865 aa).

D233 is a catalytic residue. Residues N330, N447, N503, and N764 are each glycosylated (N-linked (GlcNAc...) asparagine). In terms of domain architecture, PA14 spans 411 to 579 (TGQPGYTFRV…DTDTAIQQAV (169 aa)).

The protein belongs to the glycosyl hydrolase 3 family.

The protein localises to the secreted. It catalyses the reaction Hydrolysis of terminal, non-reducing beta-D-glucosyl residues with release of beta-D-glucose.. Its pathway is glycan metabolism; cellulose degradation. Beta-glucosidases are one of a number of cellulolytic enzymes involved in the degradation of cellulosic biomass. Catalyzes the last step releasing glucose from the inhibitory cellobiose. In Aspergillus fumigatus (strain CBS 144.89 / FGSC A1163 / CEA10) (Neosartorya fumigata), this protein is Probable beta-glucosidase J (bglJ).